The sequence spans 1088 residues: RNA-directed RNA polymerase (1088 aa).

Residues 501 to 687 (LSYGDVTRFL…AKRYIAGGKI (187 aa)) form the RdRp catalytic domain.

This sequence belongs to the reoviridae RNA-directed RNA polymerase family. Interacts with VP3 (Potential). Interacts with VP2; this interaction activates VP1. Interacts with NSP5; this interaction is probably necessary for the formation of functional virus factories. Interacts with NSP2; this interaction is weak. It depends on Mg(2+) as a cofactor.

The protein resides in the virion. The enzyme catalyses RNA(n) + a ribonucleoside 5'-triphosphate = RNA(n+1) + diphosphate. RNA-directed RNA polymerase that is involved in both transcription and genome replication. Together with VP3 capping enzyme, forms an enzyme complex positioned near the channels situated at each of the five-fold vertices of the core. Following infection, the outermost layer of the virus is lost, leaving a double-layered particle (DLP) made up of the core and VP6 shell. VP1 then catalyzes the transcription of fully conservative plus-strand genomic RNAs that are extruded through the DLP's channels into the cytoplasm where they function as mRNAs for translation of viral proteins. One copy of each of the viral (+)RNAs is also recruited during core assembly, together with newly synthesized polymerase complexes and VP2. The polymerase of these novo-formed particles catalyzes the synthesis of complementary minus-strands leading to dsRNA formation. To do so, the polymerase specifically recognizes and binds 4 bases 5'-UGUG-3' in the conserved 3'-sequence of plus-strand RNA templates. VP2 presumably activates the autoinhibited VP1-RNA complex to coordinate packaging and genome replication. Once dsRNA synthesis is complete, the polymerase switches to the transcriptional mode, thus providing secondary transcription. In Rotavirus A (strain RVA/Human/Philippines/L26/1987/G12P1B[4]) (RV-A), this protein is RNA-directed RNA polymerase.